Reading from the N-terminus, the 325-residue chain is uncharacterized protein (325 aa).

Residues 10–30 traverse the membrane as a helical segment; it reads IVFVSLAALVLLVSVSVFIYH. The 73-residue stretch at 94-166 folds into the AB hydrolase-1 domain; the sequence is KIAVVDRAGY…EIKAIIAMDI (73 aa).

It localises to the cell membrane. This is an uncharacterized protein from Bacillus subtilis (strain 168).